The primary structure comprises 246 residues: Carboxymethylenebutenolidase homolog (246 aa).

Catalysis depends on residues Cys-132, Asp-179, and His-212.

Belongs to the dienelactone hydrolase family.

It localises to the cytoplasm. The protein resides in the cytosol. Its function is as follows. Cysteine hydrolase. In Xenopus tropicalis (Western clawed frog), this protein is Carboxymethylenebutenolidase homolog (cmbl).